A 229-amino-acid polypeptide reads, in one-letter code: Flagellar L-ring protein (229 aa).

A signal peptide spans 1–23; it reads MLSRLGARALVCLAGVAMLAASG. Cysteine 24 is lipidated: N-palmitoyl cysteine. Cysteine 24 is lipidated: S-diacylglycerol cysteine.

This sequence belongs to the FlgH family. The basal body constitutes a major portion of the flagellar organelle and consists of four rings (L,P,S, and M) mounted on a central rod.

The protein resides in the cell outer membrane. Its subcellular location is the bacterial flagellum basal body. Its function is as follows. Assembles around the rod to form the L-ring and probably protects the motor/basal body from shearing forces during rotation. This is Flagellar L-ring protein from Cupriavidus taiwanensis (strain DSM 17343 / BCRC 17206 / CCUG 44338 / CIP 107171 / LMG 19424 / R1) (Ralstonia taiwanensis (strain LMG 19424)).